Consider the following 520-residue polypeptide: MSWATRPPFLPPRHAAGQCGPVGVRKEMHCGVASRWRRRRPWLDPAAAAAAAGEQQALEPEPGEAGRDGMGDSGRDSRSPDSSSPNPLSQGIRPSSPPGPPLTPSAPPPPMPPPPLGSPFPVISSSMGSPGLPPPAPPGFSGPVSSPQINSTVSLPGGGSGPPEDVKPPVLGVRGLHCPPPPGGPGAGKRLCAICGDRSSGKHYGVYSCEGCKGFFKRTIRKDLTYSCRDNKDCTVDKRQRNRCQYCRYQKCLATGMKREAVQEERQRGKDKDGDGDGAGGAPEEMPVDRILEAELAVEQKSDQGVEGPGATGGGGSSPNDPVTNICQAADKQLFTLVEWAKRIPHFSSLPLDDQVILLRAGWNELLIASFSHRSIDVRDGILLATGLHVHRNSAHSAGVGAIFDRVLTELVSKMRDMRMDKTELGCLRAIILFNPDAKGLSNPGEVEILREKVYASLETYCKQKYPEQQGRFAKLLLRLPALRSIGLKCLEHLFFFKLIGDTPIDTFLMEMLEAPHQLA.

Residues M1–K167 are disordered. The tract at residues M1–L191 is modulating. The residue at position 25 (R25) is an Omega-N-methylarginine. Positions E64–S79 are enriched in basic and acidic residues. The span at S95–S118 shows a compositional bias: pro residues. Low complexity predominate over residues P119–P130. A compositionally biased stretch (pro residues) spans G131–F140. 2 NR C4-type zinc fingers span residues C192 to C212 and C228 to C252. The segment at residues C192–M257 is a DNA-binding region (nuclear receptor). The segment at K258 to I382 is hinge. Over residues Q263 to D275 the composition is skewed to basic and acidic residues. Disordered stretches follow at residues Q263–E285 and Q300–V323. The NR LBD domain occupies P283 to P516. Positions E307–S317 are enriched in gly residues.

It belongs to the nuclear hormone receptor family. NR2 subfamily. Homodimer (in vitro). Heterodimer with other retinoic acid receptor family members. Binds DNA preferentially as a RAR/RXR heterodimer. Interacts with NR1H3. Interacts with AKAP13. In terms of tissue distribution, in all tissues tested, including brain, thymus, spleen and liver.

Its subcellular location is the nucleus. The protein localises to the cytoplasm. In terms of biological role, receptor for retinoic acid. Retinoic acid receptors bind as heterodimers to their target response elements in response to their ligands, all-trans or 9-cis retinoic acid, and regulate gene expression in various biological processes. The RAR/RXR heterodimers bind to the retinoic acid response elements (RARE). The sequence is that of Retinoic acid receptor RXR-beta (Rxrb) from Mus musculus (Mouse).